The primary structure comprises 246 residues: Probable chemoreceptor glutamine deamidase CheD (246 aa).

The tract at residues 225 to 246 (GAGVQPAVQKAASPYAANLSRK) is disordered.

The protein belongs to the CheD family.

It carries out the reaction L-glutaminyl-[protein] + H2O = L-glutamyl-[protein] + NH4(+). Its function is as follows. Probably deamidates glutamine residues to glutamate on methyl-accepting chemotaxis receptors (MCPs), playing an important role in chemotaxis. This Burkholderia vietnamiensis (strain G4 / LMG 22486) (Burkholderia cepacia (strain R1808)) protein is Probable chemoreceptor glutamine deamidase CheD.